We begin with the raw amino-acid sequence, 895 residues long: Microsomal triglyceride transfer protein large subunit (895 aa).

The first 18 residues, 1-18, serve as a signal peptide directing secretion; it reads MILLAVLFLCFFSSYSAS. The Vitellogenin domain occupies 28 to 659; it reads LNNERLYKLT…VFQYLGKAGL (632 aa). An intrachain disulfide couples Cys174 to Cys194.

Heterodimer; heterodimerizes with the protein disulfide isomerase (P4HB/PDI). Interacts with APOB. Interacts with PRAP1.

It localises to the endoplasmic reticulum. Its subcellular location is the golgi apparatus. It carries out the reaction a 1,2-diacyl-sn-glycero-3-phosphocholine(in) = a 1,2-diacyl-sn-glycero-3-phosphocholine(out). It catalyses the reaction a 1,2-diacyl-sn-glycero-3-phosphoethanolamine(in) = a 1,2-diacyl-sn-glycero-3-phosphoethanolamine(out). The enzyme catalyses a cholesterol ester(in) = a cholesterol ester(out). The catalysed reaction is a triacyl-sn-glycerol(in) = a triacyl-sn-glycerol(out). Functionally, catalyzes the transport of triglyceride, cholesteryl ester, and phospholipid between phospholipid surfaces. Required for the assembly and secretion of plasma lipoproteins that contain apolipoprotein B. May be involved in regulating cholesteryl ester biosynthesis in cells that produce lipoproteins. This chain is Microsomal triglyceride transfer protein large subunit (MTTP), found in Mesocricetus auratus (Golden hamster).